A 659-amino-acid chain; its full sequence is ATP-binding cassette sub-family D member 3 (659 aa).

An interaction with PEX19 region spans residues 1–61 (MAAFSKYLTA…GKKERAVVDK (61 aa)). A glycan (N-linked (GlcNAc...) asparagine) is linked at asparagine 12. An N6-acetyllysine modification is found at lysine 61. Residues 84-104 (GYLLLIAVMLVSRTYCDVWMI) form a helical membrane-spanning segment. Residues 85-372 (YLLLIAVMLV…MLLRMSQALG (288 aa)) form the ABC transmembrane type-1 domain. Residue asparagine 106 is glycosylated (N-linked (GlcNAc...) asparagine). Residues 126 to 146 (LFNFIAAMPLISLVNNFLKYG) traverse the membrane as a helical segment. Asparagine 206 carries N-linked (GlcNAc...) asparagine glycosylation. The chain crosses the membrane as a helical span at residues 224 to 244 (AIGAQGPASMMAYLLVSGLFL). An N6-acetyllysine modification is found at lysine 260. Residues 313-333 (MGFIDSIIAKYVATVVGYLVV) form a helical membrane-spanning segment. The residue at position 399 (lysine 399) is an N6-acetyllysine. The residue at position 424 (serine 424) is a Phosphoserine. The region spanning 434–659 (INTDNIIKFD…ITEDTVEFGS (226 aa)) is the ABC transporter domain. 473-480 (GPNGCGKS) lines the ATP pocket. Lysine 533 carries the post-translational modification N6-acetyllysine. Phosphoserine is present on serine 659.

This sequence belongs to the ABC transporter superfamily. ABCD family. Peroxisomal fatty acyl CoA transporter (TC 3.A.1.203) subfamily. Homodimers. Can form heterodimers with ABCD1 and ABCD2. Dimerization is necessary to form an active transporter. Interacts with PEX19; mediates the targeting of ABCD3 to peroxisomes. Ubiquitinated by PEX2 during pexophagy in response to starvation, leading to its degradation.

The protein localises to the peroxisome membrane. The enzyme catalyses a very long-chain fatty acyl-CoA + H2O = a very long-chain fatty acid + CoA + H(+). It carries out the reaction a very long-chain fatty acid(in) + ATP + H2O = a very long-chain fatty acid(out) + ADP + phosphate + H(+). It catalyses the reaction a long-chain fatty acyl-CoA + H2O = a long-chain fatty acid + CoA + H(+). The catalysed reaction is a long-chain fatty acid(in) + ATP + H2O = a long-chain fatty acid(out) + ADP + phosphate + H(+). The enzyme catalyses pristanoyl-CoA + H2O = 2,6,10,14-tetramethylpentadecanoate + CoA + H(+). It carries out the reaction 2,6,10,14-tetramethylpentadecanoate(in) + ATP + H2O = 2,6,10,14-tetramethylpentadecanoate(out) + ADP + phosphate + H(+). It catalyses the reaction hexadecanedioyl-CoA + H2O = hexadecanedioate + CoA + H(+). The catalysed reaction is hexadecanedioate(in) + ATP + H2O = hexadecanedioate(out) + ADP + phosphate + H(+). The enzyme catalyses (5Z,8Z,11Z,14Z,17Z)-eicosapentaenoyl-CoA + H2O = (5Z,8Z,11Z,14Z,17Z)-eicosapentaenoate + CoA + H(+). It carries out the reaction (5Z,8Z,11Z,14Z,17Z)-eicosapentaenoate(in) + ATP + H2O = (5Z,8Z,11Z,14Z,17Z)-eicosapentaenoate(out) + ADP + phosphate + H(+). It catalyses the reaction (4Z,7Z,10Z,13Z,16Z,19Z)-docosahexaenoyl-CoA + H2O = (4Z,7Z,10Z,13Z,16Z,19Z)-docosahexaenoate + CoA + H(+). The catalysed reaction is (4Z,7Z,10Z,13Z,16Z,19Z)-docosahexaenoate(in) + ATP + H2O = (4Z,7Z,10Z,13Z,16Z,19Z)-docosahexaenoate(out) + ADP + phosphate + H(+). Its function is as follows. Broad substrate specificity ATP-dependent transporter of the ATP-binding cassette (ABC) family that catalyzes the transport of long-chain fatty acids (LCFA)-CoA, dicarboxylic acids-CoA, long-branched-chain fatty acids-CoA and bile acids from the cytosol to the peroxisome lumen for beta-oxydation. Has fatty acyl-CoA thioesterase and ATPase activities. Probably hydrolyzes fatty acyl-CoAs into free fatty acids prior to their ATP-dependent transport into peroxisomes. Thus, play a role in regulation of LCFAs and energy metabolism namely, in the degradation and biosynthesis of fatty acids by beta-oxidation. This is ATP-binding cassette sub-family D member 3 (Abcd3) from Mus musculus (Mouse).